The primary structure comprises 509 residues: DNA nucleotidylexotransferase (509 aa).

The disordered stretch occupies residues 1–25 (MDPLCTASSGPRKKRPRQVGASMAS). A Nuclear localization signal motif is present at residues 11–17 (PRKKRPR). A BRCT domain is found at 27–124 (PHDIKFQNLV…KPVEITGKHQ (98 aa)). The mediates interaction with DNTTIP2 stretch occupies residues 151-509 (SQYACQRKTT…DYIEPWERNA (359 aa)). The involved in DNA binding stretch occupies residues 258-262 (VGLKT). A 2'-deoxyribonucleoside 5'-triphosphate contacts are provided by residues 333 to 338 (GFRRGK) and 342 to 345 (HDVD). Mg(2+) is bound by residues Asp343, Asp345, and Asp433. A 2'-deoxyribonucleoside 5'-triphosphate is bound at residue 448–449 (GW).

This sequence belongs to the DNA polymerase type-X family. Interacts with PRP19 and DNTTIP1. Forms a ternary complex with DNTTIP2 and core histone. Released from this complex by PCNA. Interacts with TRERF1. The cofactor is Mg(2+).

It is found in the nucleus. It catalyses the reaction DNA(n) + a 2'-deoxyribonucleoside 5'-triphosphate = DNA(n+1) + diphosphate. Template-independent DNA polymerase which catalyzes the random addition of deoxynucleoside 5'-triphosphate to the 3'-end of a DNA initiator. One of the in vivo functions of this enzyme is the addition of nucleotides at the junction (N region) of rearranged Ig heavy chain and T-cell receptor gene segments during the maturation of B- and T-cells. The sequence is that of DNA nucleotidylexotransferase (DNTT) from Bos taurus (Bovine).